The sequence spans 122 residues: Large ribosomal subunit protein uL14 (122 aa).

This sequence belongs to the universal ribosomal protein uL14 family. As to quaternary structure, part of the 50S ribosomal subunit. Forms a cluster with proteins L3 and L19. In the 70S ribosome, L14 and L19 interact and together make contacts with the 16S rRNA in bridges B5 and B8.

Binds to 23S rRNA. Forms part of two intersubunit bridges in the 70S ribosome. The polypeptide is Large ribosomal subunit protein uL14 (Thermobifida fusca (strain YX)).